A 205-amino-acid chain; its full sequence is Cyanate hydratase (205 aa).

Active-site residues include R133, E136, and S159.

The protein belongs to the cyanase family.

The enzyme catalyses cyanate + hydrogencarbonate + 3 H(+) = NH4(+) + 2 CO2. Its function is as follows. Catalyzes the reaction of cyanate with bicarbonate to produce ammonia and carbon dioxide. This Thalassiosira pseudonana (Marine diatom) protein is Cyanate hydratase.